The following is a 480-amino-acid chain: ATP synthase subunit beta (480 aa).

153-160 provides a ligand contact to ATP; it reads GGAGVGKT.

It belongs to the ATPase alpha/beta chains family. In terms of assembly, F-type ATPases have 2 components, CF(1) - the catalytic core - and CF(0) - the membrane proton channel. CF(1) has five subunits: alpha(3), beta(3), gamma(1), delta(1), epsilon(1). CF(0) has three main subunits: a(1), b(2) and c(9-12). The alpha and beta chains form an alternating ring which encloses part of the gamma chain. CF(1) is attached to CF(0) by a central stalk formed by the gamma and epsilon chains, while a peripheral stalk is formed by the delta and b chains.

Its subcellular location is the cell membrane. It catalyses the reaction ATP + H2O + 4 H(+)(in) = ADP + phosphate + 5 H(+)(out). Its function is as follows. Produces ATP from ADP in the presence of a proton gradient across the membrane. The catalytic sites are hosted primarily by the beta subunits. This chain is ATP synthase subunit beta, found in Lactobacillus gasseri (strain ATCC 33323 / DSM 20243 / BCRC 14619 / CIP 102991 / JCM 1131 / KCTC 3163 / NCIMB 11718 / NCTC 13722 / AM63).